The sequence spans 129 residues: Virion-associated protein (129 aa).

2 coiled-coil regions span residues 1 to 31 (MANL…ILEL) and 38 to 59 (TKES…LIND). Residues 122 to 129 (PAGWPNQF) form a capsid binding region.

This sequence belongs to the caulimovirus ORF III family. Homotetramer, through coiled-coil domain. Homotrimer when interacts with icosehadral capsid. Interacts with capsid protein, and with Movement protein.

Its subcellular location is the virion. The protein resides in the host cell junction. The protein localises to the host plasmodesma. Its function is as follows. Plays a role in virus cell-to-cell and plant-to-plant transmission. Interacts with virion icosahedral capsid and movement protein, thereby facilitating virion cell-to-cell transmission through plasmodesmata opened by viral movement protein. Also interacts with aphid transmission factor, attaching the virion to aphid stylet when the animal feeds on an virus infected plant. Aphid saliva may later detach the virion, inducing release of infectious particles when the animal feeds on a new plant. The protein is Virion-associated protein of Arabidopsis thaliana (Mouse-ear cress).